A 744-amino-acid polypeptide reads, in one-letter code: FHF complex subunit HOOK-interacting protein 2B (744 aa).

Disordered regions lie at residues Lys184–Asp213 and Leu510–Gly530. Basic and acidic residues predominate over residues Ala197–Asp213.

This sequence belongs to the FHIP family. Expressed in colon.

Able to activate MAPK/ERK and TGFB signaling pathways. May regulate the activity of genes involved in intestinal barrier function and immunoprotective inflammation. May play a role in cell proliferation. The sequence is that of FHF complex subunit HOOK-interacting protein 2B from Mus musculus (Mouse).